A 317-amino-acid chain; its full sequence is 4-hydroxy-3-methylbut-2-enyl diphosphate reductase (317 aa).

[4Fe-4S] cluster is bound at residue C12. Positions 41 and 74 each coordinate (2E)-4-hydroxy-3-methylbut-2-enyl diphosphate. Residues H41 and H74 each coordinate dimethylallyl diphosphate. 2 residues coordinate isopentenyl diphosphate: H41 and H74. C97 is a binding site for [4Fe-4S] cluster. Residue H125 participates in (2E)-4-hydroxy-3-methylbut-2-enyl diphosphate binding. Residue H125 coordinates dimethylallyl diphosphate. H125 is an isopentenyl diphosphate binding site. The active-site Proton donor is the E127. T168 is a binding site for (2E)-4-hydroxy-3-methylbut-2-enyl diphosphate. C198 contributes to the [4Fe-4S] cluster binding site. (2E)-4-hydroxy-3-methylbut-2-enyl diphosphate is bound by residues S226, S227, N228, and S270. Residues S226, S227, N228, and S270 each contribute to the dimethylallyl diphosphate site. Isopentenyl diphosphate contacts are provided by S226, S227, N228, and S270.

The protein belongs to the IspH family. In terms of assembly, homodimer. [4Fe-4S] cluster serves as cofactor.

The catalysed reaction is isopentenyl diphosphate + 2 oxidized [2Fe-2S]-[ferredoxin] + H2O = (2E)-4-hydroxy-3-methylbut-2-enyl diphosphate + 2 reduced [2Fe-2S]-[ferredoxin] + 2 H(+). The enzyme catalyses dimethylallyl diphosphate + 2 oxidized [2Fe-2S]-[ferredoxin] + H2O = (2E)-4-hydroxy-3-methylbut-2-enyl diphosphate + 2 reduced [2Fe-2S]-[ferredoxin] + 2 H(+). It functions in the pathway isoprenoid biosynthesis; dimethylallyl diphosphate biosynthesis; dimethylallyl diphosphate from (2E)-4-hydroxy-3-methylbutenyl diphosphate: step 1/1. It participates in isoprenoid biosynthesis; isopentenyl diphosphate biosynthesis via DXP pathway; isopentenyl diphosphate from 1-deoxy-D-xylulose 5-phosphate: step 6/6. In terms of biological role, catalyzes the conversion of 1-hydroxy-2-methyl-2-(E)-butenyl 4-diphosphate (HMBPP) into a mixture of isopentenyl diphosphate (IPP) and dimethylallyl diphosphate (DMAPP). Acts in the terminal step of the DOXP/MEP pathway for isoprenoid precursor biosynthesis. The chain is 4-hydroxy-3-methylbut-2-enyl diphosphate reductase from Serratia proteamaculans (strain 568).